A 343-amino-acid chain; its full sequence is Protein RecA (343 aa).

65 to 72 serves as a coordination point for ATP; sequence GPESSGKT.

Belongs to the RecA family.

It is found in the cytoplasm. Its function is as follows. Can catalyze the hydrolysis of ATP in the presence of single-stranded DNA, the ATP-dependent uptake of single-stranded DNA by duplex DNA, and the ATP-dependent hybridization of homologous single-stranded DNAs. It interacts with LexA causing its activation and leading to its autocatalytic cleavage. The sequence is that of Protein RecA from Campylobacter jejuni subsp. doylei (strain ATCC BAA-1458 / RM4099 / 269.97).